Consider the following 473-residue polypeptide: Chromosomal replication initiator protein DnaA (473 aa).

Residues 1–90 form a domain I, interacts with DnaA modulators region; it reads MSSSLWLQCL…KRVTAPKSET (90 aa). The domain II stretch occupies residues 91 to 136; the sequence is IAPARTRTAADVAAESSAPAQLQARKPVHNIWRDEEPVAVDLNHRS. Residues 137-353 are domain III, AAA+ region; it reads NVNPKHKFNN…GALNRVIANA (217 aa). Positions 181, 183, 184, and 185 each coordinate ATP. The interval 354-473 is domain IV, binds dsDNA; the sequence is NFTGRPITID…YSNLIRTLSS (120 aa).

Belongs to the DnaA family. Oligomerizes as a right-handed, spiral filament on DNA at oriC.

It localises to the cytoplasm. In terms of biological role, plays an essential role in the initiation and regulation of chromosomal replication. ATP-DnaA binds to the origin of replication (oriC) to initiate formation of the DNA replication initiation complex once per cell cycle. Binds the DnaA box (a 9 base pair repeat at the origin) and separates the double-stranded (ds)DNA. Forms a right-handed helical filament on oriC DNA; dsDNA binds to the exterior of the filament while single-stranded (ss)DNA is stabiized in the filament's interior. The ATP-DnaA-oriC complex binds and stabilizes one strand of the AT-rich DNA unwinding element (DUE), permitting loading of DNA polymerase. After initiation quickly degrades to an ADP-DnaA complex that is not apt for DNA replication. Binds acidic phospholipids. The polypeptide is Chromosomal replication initiator protein DnaA (Vibrio atlanticus (strain LGP32) (Vibrio splendidus (strain Mel32))).